The following is a 512-amino-acid chain: Ankyrin repeat domain-containing protein SOWAHC (512 aa).

A phosphoserine mark is found at Ser-82 and Ser-125. The disordered stretch occupies residues 126-248; it reads LGLGGEVSDQ…AEEESSVGAS (123 aa). Positions 173 to 186 are enriched in low complexity; that stretch reads PPQGEAEGGSSPSG. Ser-205 is modified (phosphoserine). The span at 214–228 shows a compositional bias: gly residues; the sequence is PGDGNAGGRSRGGGD. Positions 229–248 are enriched in low complexity; sequence SDTASLASSSAEEESSVGAS. ANK repeat units lie at residues 288–317 and 327–357; these read TGFTCLHWAAKHGRQELLAMLVNFATKHQL and GGYTALHLAAMHGHVEVVKLLVGAYDADVDI. At Arg-395 the chain carries Omega-N-methylarginine. Residues 427 to 500 form a disordered region; it reads HVPEGWTGGS…EERSLRGYSS (74 aa). Residues 453–462 show a composition bias toward basic residues; sequence MKPRLNKIRF. Positions 481 to 492 are enriched in acidic residues; the sequence is EEGEEEEEEEEE.

The protein belongs to the SOWAH family.

The protein is Ankyrin repeat domain-containing protein SOWAHC (Sowahc) of Mus musculus (Mouse).